Here is a 342-residue protein sequence, read N- to C-terminus: Holliday junction branch migration complex subunit RuvB (342 aa).

The large ATPase domain (RuvB-L) stretch occupies residues threonine 2–tyrosine 181. Leucine 20, arginine 21, glycine 62, lysine 65, threonine 66, threonine 67, arginine 171, tyrosine 181, and arginine 218 together coordinate ATP. Mg(2+) is bound at residue threonine 66. The small ATPAse domain (RuvB-S) stretch occupies residues serine 182–glutamate 252. The head domain (RuvB-H) stretch occupies residues lysine 255–glutamate 342. Residues arginine 291, arginine 310, and arginine 315 each coordinate DNA.

This sequence belongs to the RuvB family. In terms of assembly, homohexamer. Forms an RuvA(8)-RuvB(12)-Holliday junction (HJ) complex. HJ DNA is sandwiched between 2 RuvA tetramers; dsDNA enters through RuvA and exits via RuvB. An RuvB hexamer assembles on each DNA strand where it exits the tetramer. Each RuvB hexamer is contacted by two RuvA subunits (via domain III) on 2 adjacent RuvB subunits; this complex drives branch migration. In the full resolvosome a probable DNA-RuvA(4)-RuvB(12)-RuvC(2) complex forms which resolves the HJ.

Its subcellular location is the cytoplasm. The enzyme catalyses ATP + H2O = ADP + phosphate + H(+). The RuvA-RuvB-RuvC complex processes Holliday junction (HJ) DNA during genetic recombination and DNA repair, while the RuvA-RuvB complex plays an important role in the rescue of blocked DNA replication forks via replication fork reversal (RFR). RuvA specifically binds to HJ cruciform DNA, conferring on it an open structure. The RuvB hexamer acts as an ATP-dependent pump, pulling dsDNA into and through the RuvAB complex. RuvB forms 2 homohexamers on either side of HJ DNA bound by 1 or 2 RuvA tetramers; 4 subunits per hexamer contact DNA at a time. Coordinated motions by a converter formed by DNA-disengaged RuvB subunits stimulates ATP hydrolysis and nucleotide exchange. Immobilization of the converter enables RuvB to convert the ATP-contained energy into a lever motion, pulling 2 nucleotides of DNA out of the RuvA tetramer per ATP hydrolyzed, thus driving DNA branch migration. The RuvB motors rotate together with the DNA substrate, which together with the progressing nucleotide cycle form the mechanistic basis for DNA recombination by continuous HJ branch migration. Branch migration allows RuvC to scan DNA until it finds its consensus sequence, where it cleaves and resolves cruciform DNA. This is Holliday junction branch migration complex subunit RuvB from Novosphingobium aromaticivorans (strain ATCC 700278 / DSM 12444 / CCUG 56034 / CIP 105152 / NBRC 16084 / F199).